Here is a 560-residue protein sequence, read N- to C-terminus: MFS siderochrome iron transporter 1 (560 aa).

The N-linked (GlcNAc...) asparagine glycan is linked to asparagine 29. 11 helical membrane passes run 53-73, 90-110, 115-135, 146-166, 177-194, 211-231, 264-284, 291-311, 331-351, 354-374, and 379-399; these read LWLT…LVSV, LLAS…LTLA, VWGR…ALIM, VAAH…VDVM, MIMF…TFAG, FGAF…IMLF, VVGI…FSIV, WATG…AIFL, PTII…LLTI, AGYV…GIGL, and FKWA…LLIP. An N-linked (GlcNAc...) asparagine glycan is attached at asparagine 404. A run of 3 helical transmembrane segments spans residues 407–427, 441–461, and 522–542; these read IGAV…FSVC, VAVV…VGLA, and VIAG…WRNV.

It belongs to the major facilitator superfamily.

It is found in the membrane. Major facilitator transporter involved in siderophore transport. This Ajellomyces capsulatus (Darling's disease fungus) protein is MFS siderochrome iron transporter 1.